The following is a 30-amino-acid chain: Kalata-B5 (30 aa).

The segment at residues 1-30 (GTPCGESCVYIPCISGVIGCSCTDKVCYLN) is a cross-link (cyclopeptide (Gly-Asn)). Disulfide bonds link Cys4–Cys20, Cys8–Cys22, and Cys13–Cys27.

In terms of processing, this is a cyclic peptide.

Its function is as follows. Probably participates in a plant defense mechanism. This is Kalata-B5 from Oldenlandia affinis.